Reading from the N-terminus, the 135-residue chain is Large ribosomal subunit protein uL16c (135 aa).

It belongs to the universal ribosomal protein uL16 family. Part of the 50S ribosomal subunit.

Its subcellular location is the plastid. It localises to the chloroplast. The protein is Large ribosomal subunit protein uL16c of Stigeoclonium helveticum (Green alga).